Consider the following 570-residue polypeptide: Nucleoprotein (570 aa).

Residues 54-241 (MRKQKRDDGD…IDTKKSSLNI (188 aa)) form a binding site for the cap structure m7GTP region. The Mn(2+) site is built by D390 and E392. 4 residues coordinate Zn(2+): E400, C507, H510, and C530. Mn(2+) is bound at residue D534.

This sequence belongs to the arenaviridae nucleocapsid protein family. In terms of assembly, homomultimerizes to form the nucleocapsid. Binds to viral genomic RNA. Interacts with glycoprotein G2. Interacts with protein Z; this interaction probably directs the encapsidated genome to budding sites. Interacts with protein L; this interaction does not interfere with Z-L interaction. Interacts with host IKBKE (via Protein kinase domain); the interaction inhibits IKBKE kinase activity.

It localises to the virion. The protein resides in the host cytoplasm. Encapsidates the genome, protecting it from nucleases. The encapsidated genomic RNA is termed the nucleocapsid (NC). Serves as template for viral transcription and replication. The increased presence of protein N in host cell does not seem to trigger the switch from transcription to replication as observed in other negative strain RNA viruses. Through the interaction with host IKBKE, strongly inhibits the phosphorylation and nuclear translocation of host IRF3, a protein involved in interferon activation pathway, leading to the inhibition of interferon-beta and IRF3-dependent promoters activation. Also encodes a functional 3'-5' exoribonuclease that degrades preferentially dsRNA substrates and thereby participates in the suppression of interferon induction. The chain is Nucleoprotein from Homo sapiens (Human).